A 141-amino-acid polypeptide reads, in one-letter code: uncharacterized protein (141 aa).

Its subcellular location is the cytoplasm. This is an uncharacterized protein from Homo sapiens (Human).